Consider the following 322-residue polypeptide: N-acetyl-gamma-glutamyl-phosphate reductase (322 aa).

The active site involves Cys-117.

Belongs to the NAGSA dehydrogenase family. Type 2 subfamily.

Its subcellular location is the cytoplasm. The catalysed reaction is N-acetyl-L-glutamate 5-semialdehyde + phosphate + NADP(+) = N-acetyl-L-glutamyl 5-phosphate + NADPH + H(+). It participates in amino-acid biosynthesis; L-arginine biosynthesis; N(2)-acetyl-L-ornithine from L-glutamate: step 3/4. In terms of biological role, catalyzes the NADPH-dependent reduction of N-acetyl-5-glutamyl phosphate to yield N-acetyl-L-glutamate 5-semialdehyde. The polypeptide is N-acetyl-gamma-glutamyl-phosphate reductase (Trichormus variabilis (strain ATCC 29413 / PCC 7937) (Anabaena variabilis)).